A 356-amino-acid chain; its full sequence is NADH-quinone oxidoreductase subunit H (356 aa).

A run of 8 helical transmembrane segments spans residues 4 to 24 (ALIL…LTGV), 79 to 99 (LLAP…IPFG), 127 to 147 (GVLY…IAGW), 166 to 186 (ISYE…TGSL), 198 to 218 (MWNI…TAMF), 251 to 271 (FFLA…LLFF), 289 to 309 (FIGL…FIWV), and 329 to 349 (MIPW…YWKE).

It belongs to the complex I subunit 1 family. NDH-1 is composed of 14 different subunits. Subunits NuoA, H, J, K, L, M, N constitute the membrane sector of the complex.

The protein localises to the cell inner membrane. It carries out the reaction a quinone + NADH + 5 H(+)(in) = a quinol + NAD(+) + 4 H(+)(out). NDH-1 shuttles electrons from NADH, via FMN and iron-sulfur (Fe-S) centers, to quinones in the respiratory chain. The immediate electron acceptor for the enzyme in this species is believed to be ubiquinone. Couples the redox reaction to proton translocation (for every two electrons transferred, four hydrogen ions are translocated across the cytoplasmic membrane), and thus conserves the redox energy in a proton gradient. This subunit may bind ubiquinone. This Leptospira biflexa serovar Patoc (strain Patoc 1 / ATCC 23582 / Paris) protein is NADH-quinone oxidoreductase subunit H.